Reading from the N-terminus, the 337-residue chain is RNA 3'-terminal phosphate cyclase (337 aa).

ATP is bound by residues Gln101 and 282-285 (HMSD). His306 (tele-AMP-histidine intermediate) is an active-site residue.

Belongs to the RNA 3'-terminal cyclase family. Type 1 subfamily.

It localises to the cytoplasm. It catalyses the reaction a 3'-end 3'-phospho-ribonucleotide-RNA + ATP = a 3'-end 2',3'-cyclophospho-ribonucleotide-RNA + AMP + diphosphate. Its function is as follows. Catalyzes the conversion of 3'-phosphate to a 2',3'-cyclic phosphodiester at the end of RNA. The mechanism of action of the enzyme occurs in 3 steps: (A) adenylation of the enzyme by ATP; (B) transfer of adenylate to an RNA-N3'P to produce RNA-N3'PP5'A; (C) and attack of the adjacent 2'-hydroxyl on the 3'-phosphorus in the diester linkage to produce the cyclic end product. The biological role of this enzyme is unknown but it is likely to function in some aspects of cellular RNA processing. This Saccharolobus islandicus (strain M.16.4 / Kamchatka #3) (Sulfolobus islandicus) protein is RNA 3'-terminal phosphate cyclase.